Consider the following 152-residue polypeptide: ATP synthase epsilon chain 2 (152 aa).

It belongs to the ATPase epsilon chain family. F-type ATPases have 2 components, CF(1) - the catalytic core - and CF(0) - the membrane proton channel. CF(1) has five subunits: alpha(3), beta(3), gamma(1), delta(1), epsilon(1). CF(0) has three main subunits: a, b and c.

It localises to the cell inner membrane. Produces ATP from ADP in the presence of a proton gradient across the membrane. The protein is ATP synthase epsilon chain 2 of Burkholderia orbicola (strain AU 1054).